The chain runs to 416 residues: RNA-editing ligase 2, mitochondrial (416 aa).

Residues 1 to 17 (MLRRLGVRHFRRTPLLF) constitute a mitochondrion transit peptide. ATP-binding positions include 29–31 (TEI), 56–62 (EKVHGAN), Arg-79, Glu-126, Phe-173, and 269–271 (KFK). Lys-57 (N6-AMP-lysine intermediate) is an active-site residue.

The protein belongs to the RNA ligase 2 family. As to quaternary structure, component of the RNA editing complex, a 1600 kDa complex composed of at least 20 proteins.

Its subcellular location is the mitochondrion. It catalyses the reaction ATP + (ribonucleotide)n-3'-hydroxyl + 5'-phospho-(ribonucleotide)m = (ribonucleotide)n+m + AMP + diphosphate.. Functionally, RNA editing in kinetoplastid mitochondria inserts and deletes uridylates at multiple sites in pre-mRNAs as directed by guide RNAs. This chain is RNA-editing ligase 2, mitochondrial (REL2), found in Trypanosoma brucei brucei (strain 927/4 GUTat10.1).